The chain runs to 486 residues: B-type cell cycle switch protein ccs52B (486 aa).

Positions 24–36 (RLETLSTPPSSAS) match the PEST motif motif. Residues 27–36 (TLSTPPSSAS) show a composition bias toward polar residues. The tract at residues 27–57 (TLSTPPSSASPRAISNLSSTPSPSKSSKCSD) is disordered. Over residues 41–53 (SNLSSTPSPSKSS) the composition is skewed to low complexity. The C-box signature appears at 57–63 (DRFIPCR). A CSM motif motif is present at residues 87–98 (AYNRLLKSELFG). 7 WD repeats span residues 177–214 (QDDF…VTKL), 218–257 (GPYD…KVRT), 260–297 (GHQT…DFIG), 301–340 (GHKS…PTLR), 343–385 (EHTA…QLNS), 387–428 (DTGS…KVAT), and 431–470 (GHSM…KTPA).

The protein belongs to the WD repeat CDC20/Fizzy family. As to expression, mostly expressed in shoot apices and, to a lower extent, in roots, especially in root tips, and in hypocotyls. Expressed in nodulation-competent root zone but not in the nodules.

It functions in the pathway protein modification; protein ubiquitination. Functionally, component of the anaphase promoting complex/cyclosome (APC/C), a cell cycle-regulated E3 ubiquitin-protein ligase complex that controls progression through mitosis and the G1 phase of the cell cycle. The chain is B-type cell cycle switch protein ccs52B from Medicago truncatula (Barrel medic).